We begin with the raw amino-acid sequence, 231 residues long: NADH-ubiquinone oxidoreductase chain 4 (231 aa).

The next 6 helical transmembrane spans lie at 1–21 (PIAGSMVLAAILLKLGGYGII), 34–54 (MFLPFIVLALWGAILANLTCL), 63–85 (IAYSSISHMGLVVATIIIQTPWG), 89–111 (ALALMIAHGFTSSALFCLANTTY), 128–148 (ILPMATTWWLLANLMNIAIPP), and 169–189 (TIIMLGLSMLITASYSLHMFL).

It belongs to the complex I subunit 4 family.

The protein resides in the mitochondrion membrane. The enzyme catalyses a ubiquinone + NADH + 5 H(+)(in) = a ubiquinol + NAD(+) + 4 H(+)(out). In terms of biological role, core subunit of the mitochondrial membrane respiratory chain NADH dehydrogenase (Complex I) that is believed to belong to the minimal assembly required for catalysis. Complex I functions in the transfer of electrons from NADH to the respiratory chain. The immediate electron acceptor for the enzyme is believed to be ubiquinone. In Bothrocophias hyoprora (Amazonian hognose viper), this protein is NADH-ubiquinone oxidoreductase chain 4 (MT-ND4).